Here is a 716-residue protein sequence, read N- to C-terminus: Fusoxypene synthase (716 aa).

The tract at residues 4–328 is sesterterpenoid synthase; it reads LSYQSRLIPP…WLSACSRQNT (325 aa). D96 provides a ligand contact to Mg(2+). D96 provides a ligand contact to substrate. Residues 187–190 are substrate; it reads RMTN. N231 contributes to the substrate binding site. The substrate stretch occupies residues 235–239; it reads SYERE. The interval 329-711 is geranylfarnesyl diphosphate synthase; that stretch reads WKTNCSIDGK…CLATLSMEGC (383 aa). Isopentenyl diphosphate-binding residues include K422, R425, and H454. D461 and D465 together coordinate Mg(2+). R470 contacts dimethylallyl diphosphate. An isopentenyl diphosphate-binding site is contributed by R471. Residues K548, T549, Q587, N594, and K602 each coordinate dimethylallyl diphosphate.

It in the N-terminal section; belongs to the terpene synthase family. In the C-terminal section; belongs to the FPP/GGPP synthase family.

It carries out the reaction 4 isopentenyl diphosphate + dimethylallyl diphosphate = (2E,6E,10E,14E)-geranylfarnesyl diphosphate + 4 diphosphate. It catalyses the reaction (2E,6E,10E,14E)-geranylfarnesyl diphosphate = fusoxypene A + diphosphate. The enzyme catalyses (2E,6E,10E,14E)-geranylfarnesyl diphosphate = fusoxypene B + diphosphate. The catalysed reaction is (2E,6E,10E,14E)-geranylfarnesyl diphosphate = fusoxypene C + diphosphate. It carries out the reaction (2E,6E,10E,14E)-geranylfarnesyl diphosphate = (-)-astellatene + diphosphate. Bifunctional sesterterpenoid synthase that performs both prenyl transferase and terpene cyclase activity, converting isopentenyl diphosphate and dimethylallyl diphosphate into geranylfarnesyl diphosphate (GFPP) and then converting GFPP into the enantiomeric sesterterpenes with a 5-6-7-3-5 ring system fusoxypene A, fusoxypene B, fusoxypene C and (-)-astellatene. This chain is Fusoxypene synthase, found in Fusarium oxysporum (Fusarium vascular wilt).